Here is a 265-residue protein sequence, read N- to C-terminus: Synaptoporin (265 aa).

Topologically, residues 1 to 4 (MCMV) are cytoplasmic. The MARVEL domain maps to 1 to 202 (MCMVIFAPLF…NIWFVFKETG (202 aa)). Residues 5 to 25 (IFAPLFAIFAFATCGGYSGGL) form a helical membrane-spanning segment. The Vesicular portion of the chain corresponds to 26–81 (RLSVDCVNKTESNLSIDIAFAYPFRLHQVTFEVPTCEGKERQKLALIGDSSSSAEF). 2 N-linked (GlcNAc...) asparagine glycosylation sites follow: Asn-33 and Asn-38. The helical transmembrane segment at 82–102 (FVTVAVFAFLYSLAATVVYIF) threads the bilayer. The Cytoplasmic portion of the chain corresponds to 103-114 (FQNKYRENNRGP). Residues 115–135 (LIDFIVTVVFSFLWLVGSSAW) form a helical membrane-spanning segment. At 136–177 (AKGLSDVKVATDPKEVLLLMSACKQPSNKCMAIHSPVMSSLN) the chain is on the vesicular side. Residues 178–198 (TSVVFGFLNFILWAGNIWFVF) form a helical membrane-spanning segment. Residues 199 to 265 (KETGWHSSGQ…TGPTSFTNQI (67 aa)) lie on the Cytoplasmic side of the membrane. 5 consecutive repeat copies span residues 210-214 (YLSDP), 222-226 (YNQGG), 227-231 (YNQDS), 232-236 (YGSSS), and 238-242 (YSQQA). Positions 210–242 (YLSDPMEKHSSSYNQGGYNQDSYGSSSGYSQQA) are 5 X approximate repeats. Ser-212 carries the phosphoserine modification. The segment at 221 to 265 (SYNQGGYNQDSYGSSSGYSQQASLGPTSDEFGQQPTGPTSFTNQI) is disordered. A compositionally biased stretch (low complexity) spans 224–243 (QGGYNQDSYGSSSGYSQQAS). Positions 244 to 265 (LGPTSDEFGQQPTGPTSFTNQI) are enriched in polar residues.

It belongs to the synaptophysin/synaptobrevin family.

The protein localises to the cytoplasmic vesicle. It is found in the secretory vesicle. Its subcellular location is the synaptic vesicle membrane. The protein resides in the synapse. It localises to the synaptosome. Functionally, intrinsic membrane protein of small synaptic vesicles. Probable vesicular channel protein. This is Synaptoporin (SYNPR) from Homo sapiens (Human).